The primary structure comprises 83 residues: Turripeptide Lol11.2 (83 aa).

Residues 1–27 form the signal peptide; the sequence is MARLMMTVGCLIFIVVLLDMMVPVSNT.

Belongs to the conopeptide I2-like superfamily. In terms of processing, contains 4 disulfide bonds. In terms of tissue distribution, expressed by the venom duct.

Its subcellular location is the secreted. Acts as a neurotoxin by inhibiting voltage-gated potassium channels (Kv). The sequence is that of Turripeptide Lol11.2 from Iotyrris olangoensis (Sea snail).